The primary structure comprises 105 residues: Nitrogen fixation nifHD1 region GlnB-like protein 1 (105 aa).

Belongs to the P(II) protein family.

Its function is as follows. Could be involved in the regulation of nitrogen fixation. The protein is Nitrogen fixation nifHD1 region GlnB-like protein 1 (glnBA) of Methanosarcina barkeri.